The primary structure comprises 284 residues: Nucleotide-binding protein NMC0691 (284 aa).

G8–S15 is an ATP binding site. D58 to S61 is a GTP binding site.

Belongs to the RapZ-like family.

Displays ATPase and GTPase activities. This is Nucleotide-binding protein NMC0691 from Neisseria meningitidis serogroup C / serotype 2a (strain ATCC 700532 / DSM 15464 / FAM18).